We begin with the raw amino-acid sequence, 261 residues long: Ribonuclease PH (261 aa).

Residues Arg87 and 125 to 127 (GTR) each bind phosphate.

It belongs to the RNase PH family. As to quaternary structure, homohexameric ring arranged as a trimer of dimers.

The catalysed reaction is tRNA(n+1) + phosphate = tRNA(n) + a ribonucleoside 5'-diphosphate. Phosphorolytic 3'-5' exoribonuclease that plays an important role in tRNA 3'-end maturation. Removes nucleotide residues following the 3'-CCA terminus of tRNAs; can also add nucleotides to the ends of RNA molecules by using nucleoside diphosphates as substrates, but this may not be physiologically important. Probably plays a role in initiation of 16S rRNA degradation (leading to ribosome degradation) during starvation. The protein is Ribonuclease PH of Thermoanaerobacter pseudethanolicus (strain ATCC 33223 / 39E) (Clostridium thermohydrosulfuricum).